Here is a 301-residue protein sequence, read N- to C-terminus: Porphobilinogen deaminase (301 aa).

At Cys242 the chain carries S-(dipyrrolylmethanemethyl)cysteine.

The protein belongs to the HMBS family. As to quaternary structure, monomer. The cofactor is dipyrromethane.

The catalysed reaction is 4 porphobilinogen + H2O = hydroxymethylbilane + 4 NH4(+). The protein operates within porphyrin-containing compound metabolism; protoporphyrin-IX biosynthesis; coproporphyrinogen-III from 5-aminolevulinate: step 2/4. Tetrapolymerization of the monopyrrole PBG into the hydroxymethylbilane pre-uroporphyrinogen in several discrete steps. The sequence is that of Porphobilinogen deaminase from Rickettsia canadensis (strain McKiel).